The sequence spans 380 residues: Cytochrome b (380 aa).

Transmembrane regions (helical) follow at residues 34 to 54 (FGSL…FLAM), 78 to 99 (WLLR…YFHI), 114 to 134 (WNIG…GYVL), and 179 to 199 (FFTF…IHLL). Residues H84 and H98 each contribute to the heme b site. Residue H197 participates in heme b binding. An a ubiquinone-binding site is contributed by H202. A run of 4 helical transmembrane segments spans residues 227–247 (FKDL…STFA), 289–309 (LGGV…PITH), 321–341 (TAKA…WIGG), and 348–368 (FISI…LIIP).

This sequence belongs to the cytochrome b family. As to quaternary structure, the cytochrome bc1 complex contains 3 respiratory subunits (MT-CYB, CYC1 and UQCRFS1), 2 core proteins (UQCRC1 and UQCRC2) and probably 6 low-molecular weight proteins. The cofactor is heme b.

The protein localises to the mitochondrion inner membrane. Component of the ubiquinol-cytochrome c reductase complex (complex III or cytochrome b-c1 complex) that is part of the mitochondrial respiratory chain. The b-c1 complex mediates electron transfer from ubiquinol to cytochrome c. Contributes to the generation of a proton gradient across the mitochondrial membrane that is then used for ATP synthesis. The protein is Cytochrome b (mt-cyb) of Glandirana rugosa (Japanese wrinkled frog).